A 166-amino-acid chain; its full sequence is Cyclic pyranopterin monophosphate synthase (166 aa).

Substrate is bound by residues 83–85 (LCH) and 121–122 (ME). The active site involves D136.

The protein belongs to the MoaC family. In terms of assembly, homohexamer; trimer of dimers.

The catalysed reaction is (8S)-3',8-cyclo-7,8-dihydroguanosine 5'-triphosphate = cyclic pyranopterin phosphate + diphosphate. Its pathway is cofactor biosynthesis; molybdopterin biosynthesis. In terms of biological role, catalyzes the conversion of (8S)-3',8-cyclo-7,8-dihydroguanosine 5'-triphosphate to cyclic pyranopterin monophosphate (cPMP). This Rhodospirillum rubrum (strain ATCC 11170 / ATH 1.1.1 / DSM 467 / LMG 4362 / NCIMB 8255 / S1) protein is Cyclic pyranopterin monophosphate synthase.